We begin with the raw amino-acid sequence, 544 residues long: Membrane protein insertase YidC (544 aa).

A helical transmembrane segment spans residues 6–26 (NLLLIALLFVTFMLWQAWETD). The tract at residues 112–132 (SGLTGKNGPDNPANGPRPLFT) is disordered. 4 consecutive transmembrane segments (helical) span residues 343 to 363 (KFLH…TFIV), 418 to 438 (LGGC…YYML), 456 to 476 (LSAQ…MFFI), and 497 to 517 (PVIF…YYIV).

It belongs to the OXA1/ALB3/YidC family. Type 1 subfamily. In terms of assembly, interacts with the Sec translocase complex via SecD. Specifically interacts with transmembrane segments of nascent integral membrane proteins during membrane integration.

It is found in the cell inner membrane. Its function is as follows. Required for the insertion and/or proper folding and/or complex formation of integral membrane proteins into the membrane. Involved in integration of membrane proteins that insert both dependently and independently of the Sec translocase complex, as well as at least some lipoproteins. Aids folding of multispanning membrane proteins. The protein is Membrane protein insertase YidC of Pectobacterium carotovorum subsp. carotovorum (strain PC1).